We begin with the raw amino-acid sequence, 209 residues long: MGKFEVLDHPLIQHKLTIIREKNCGTKVFREMVNEISTLMAYEVSRDMPLKDIEIETPIAKSTQKTLAGKKVAIVPILRAGLGMVDGFLNMIPAAKVGHVGMYRDEKTLKPVEYFVKLPSDISQRQLFVVDPMLATGGSAIMAMDMLKKRGASNIKFMCLVAAPEGVKALRDAHPDIDVYTAALDDHLNEDGYIVPGLGDAGDRLFGTK.

Residues Arg-79, Arg-104, and 131 to 139 (DPMLATGGS) each bind 5-phospho-alpha-D-ribose 1-diphosphate. Residues Ile-194 and 199 to 201 (GDA) each bind uracil. Residue Asp-200 coordinates 5-phospho-alpha-D-ribose 1-diphosphate.

The protein belongs to the UPRTase family. The cofactor is Mg(2+).

It carries out the reaction UMP + diphosphate = 5-phospho-alpha-D-ribose 1-diphosphate + uracil. Its pathway is pyrimidine metabolism; UMP biosynthesis via salvage pathway; UMP from uracil: step 1/1. With respect to regulation, allosterically activated by GTP. Catalyzes the conversion of uracil and 5-phospho-alpha-D-ribose 1-diphosphate (PRPP) to UMP and diphosphate. The chain is Uracil phosphoribosyltransferase from Lactiplantibacillus plantarum (strain ATCC BAA-793 / NCIMB 8826 / WCFS1) (Lactobacillus plantarum).